We begin with the raw amino-acid sequence, 227 residues long: Lectin (227 aa).

The N-terminal stretch at 1-28 (MTMTSTTTKAMAMAAAVLAAAAVAATNA) is a signal peptide. Glutamine 29 bears the Pyrrolidone carboxylic acid mark. Chitin-binding type-1 domains are found at residues 29 to 70 (QTCG…ACCS), 71 to 113 (SQRC…PCRA), 114 to 156 (DIKC…ACCP), and 157 to 199 (EKRC…GCYK). Intrachain disulfides connect cysteine 31-cysteine 46, cysteine 40-cysteine 52, cysteine 45-cysteine 59, cysteine 63-cysteine 68, cysteine 74-cysteine 89, cysteine 83-cysteine 95, cysteine 88-cysteine 102, cysteine 106-cysteine 111, cysteine 117-cysteine 132, cysteine 126-cysteine 138, cysteine 131-cysteine 145, cysteine 149-cysteine 154, cysteine 160-cysteine 175, cysteine 169-cysteine 181, cysteine 174-cysteine 188, and cysteine 192-cysteine 197. 38–40 (MIC) is a substrate binding site. 90 to 101 (SQYGYCGFGSEY) contributes to the substrate binding site. 142-143 (SE) lines the substrate pocket. Positions 202-227 (DGMAAILANNQSVSFEGIIESVAELV) are excised as a propeptide. The N-linked (GlcNAc...) asparagine glycan is linked to asparagine 211.

As to expression, confined to root caps, several cell layers at the periphery of the coleorhiza and radicle, and in all cell layers of the coleoptile.

In terms of biological role, N-acetyl-D-glucosamine binding lectin. The sequence is that of Lectin from Oryza sativa subsp. japonica (Rice).